The primary structure comprises 560 residues: MGDNLKKRSSMTTDGDNRAPNRAMLRAVGFTDEDFHKPMIGIASTWSEITPCNIHINKLAEKVKEGVREAGGVPQIYGTITVSDGIMMGHEGMHFSLPSREVIADSIEIVSNAMRHDGVIAIGGCDKNMPGCLMALCRIDAPSIFVYGGTILPGNCDGQDVDIVSIFEAVGKFNAGKISREEFIRIEQNAIPGAGSCGGMYTANTMSSAIEALGMSLPGSASMPAVSSRKANDCYEAGKALINLIQKGITPKQILTKKAFENAITVVLVLGGSTNAVLHLIAIAKEIGVGLTLDDFDRISKKTPHLADLKPGGKYAMTDLDKVGGVHGVMKYLLKEGMLHGDCLTVTGKTIAENLKDMPDLVPNQTIVRKKSEALHPSGPLVILKGNLAPDGAVAKISGLKKISITGPAKVFESEDDCFNAIMTDKIKPGDVIIIRYEGPKGGPGMREMLAVTSALVGKGLGEDVGLMTDGRFSGGTHGLVVGHISPEAFDGGPIAIVQNGDKVTIDSSKNLLQVEISQEEIDKRLKSWKPIEPRYKTGVLAKYVKLVQSATNGAITNLL.

The segment at 1-20 (MGDNLKKRSSMTTDGDNRAP) is disordered. Residue Cys52 participates in [2Fe-2S] cluster binding. A Mg(2+)-binding site is contributed by Asp84. Residue Cys125 participates in [2Fe-2S] cluster binding. Residues Asp126 and Lys127 each coordinate Mg(2+). Lys127 carries the post-translational modification N6-carboxylysine. Cys197 contributes to the [2Fe-2S] cluster binding site. Glu448 serves as a coordination point for Mg(2+). Ser474 acts as the Proton acceptor in catalysis.

This sequence belongs to the IlvD/Edd family. In terms of assembly, homodimer. [2Fe-2S] cluster serves as cofactor. The cofactor is Mg(2+).

The catalysed reaction is (2R)-2,3-dihydroxy-3-methylbutanoate = 3-methyl-2-oxobutanoate + H2O. The enzyme catalyses (2R,3R)-2,3-dihydroxy-3-methylpentanoate = (S)-3-methyl-2-oxopentanoate + H2O. The protein operates within amino-acid biosynthesis; L-isoleucine biosynthesis; L-isoleucine from 2-oxobutanoate: step 3/4. It functions in the pathway amino-acid biosynthesis; L-valine biosynthesis; L-valine from pyruvate: step 3/4. Its function is as follows. Functions in the biosynthesis of branched-chain amino acids. Catalyzes the dehydration of (2R,3R)-2,3-dihydroxy-3-methylpentanoate (2,3-dihydroxy-3-methylvalerate) into 2-oxo-3-methylpentanoate (2-oxo-3-methylvalerate) and of (2R)-2,3-dihydroxy-3-methylbutanoate (2,3-dihydroxyisovalerate) into 2-oxo-3-methylbutanoate (2-oxoisovalerate), the penultimate precursor to L-isoleucine and L-valine, respectively. The polypeptide is Dihydroxy-acid dehydratase (Leptospira interrogans serogroup Icterohaemorrhagiae serovar Lai (strain 56601)).